The following is a 364-amino-acid chain: mRNA decay activator protein ZFP36L2-B (364 aa).

The segment covering 102–111 (SFSENGERSQ) has biased composition (basic and acidic residues). The disordered stretch occupies residues 102–129 (SFSENGERSQHLLHLQQQQQQQKAGAQV). The segment covering 113–123 (LLHLQQQQQQQ) has biased composition (low complexity). An RNA-binding motif is present at residues 133–138 (RYKTEL). 2 C3H1-type zinc fingers span residues 133–161 (RYKT…HGFH) and 171–199 (KYKT…HNAE). The RNA-binding stretch occupies residues 150–191 (YGEKCQFAHGFHELRSLTRHPKYKTELCRTFHTIGFCPYGPR). The disordered stretch occupies residues 308–350 (SESPVFDAPPSPPDSLSDRDSYLSGSLSSGSLSGSDSPTLDSN). A compositionally biased stretch (low complexity) spans 329–348 (YLSGSLSSGSLSGSDSPTLD).

Post-translationally, phosphorylated. Remains unlocalized in the egg and early embryo. From stage 21 (late neurula), expressed around the pronephros in the anterior crests, pharyngeal arch, hindbrain, mesodermal tissues around the pronephros and tail-bud. This expression pattern is maintained up to the tadpole stage.

The protein resides in the nucleus. It is found in the cytoplasm. Its function is as follows. Zinc-finger RNA-binding protein that destabilizes several cytoplasmic AU-rich element (ARE)-containing mRNA transcripts by promoting their poly(A) tail removal or deadenylation, and hence provide a mechanism for attenuating protein synthesis. Acts as a 3'-untranslated region (UTR) ARE mRNA-binding adapter protein to communicate signaling events to the mRNA decay machinery. Functions by recruiting the CCR4-NOT deadenylase complex and probably other components of the cytoplasmic RNA decay machinery to the bound ARE-containing mRNAs, and hence promotes ARE-mediated mRNA deadenylation and decay processes. Binds to 3'-UTR ARE of numerous mRNAs. Also induces the degradation of ARE-containing mRNAs even in absence of poly(A) tail. Required for tubulogenesis during pronephros development. This chain is mRNA decay activator protein ZFP36L2-B (zfp36l2-B), found in Xenopus laevis (African clawed frog).